Here is a 102-residue protein sequence, read N- to C-terminus: NADH-quinone oxidoreductase subunit K (102 aa).

The next 3 membrane-spanning stretches (helical) occupy residues 4-24 (IGLN…LVGV), 31-51 (LMLF…FAAI), and 65-85 (FFVI…LIVW).

The protein belongs to the complex I subunit 4L family. NDH-1 is composed of 14 different subunits. Subunits NuoA, H, J, K, L, M, N constitute the membrane sector of the complex.

It is found in the cell inner membrane. The catalysed reaction is a quinone + NADH + 5 H(+)(in) = a quinol + NAD(+) + 4 H(+)(out). Its function is as follows. NDH-1 shuttles electrons from NADH, via FMN and iron-sulfur (Fe-S) centers, to quinones in the respiratory chain. The immediate electron acceptor for the enzyme in this species is believed to be ubiquinone. Couples the redox reaction to proton translocation (for every two electrons transferred, four hydrogen ions are translocated across the cytoplasmic membrane), and thus conserves the redox energy in a proton gradient. This Sulfurimonas denitrificans (strain ATCC 33889 / DSM 1251) (Thiomicrospira denitrificans (strain ATCC 33889 / DSM 1251)) protein is NADH-quinone oxidoreductase subunit K.